A 132-amino-acid chain; its full sequence is Transmembrane protein 170B (132 aa).

Topologically, residues 1–37 are extracellular; sequence MRAEGADHSMINLSVQQVLSLWAHGTVLRNLTEMWYW. An N-linked (GlcNAc...) asparagine glycan is attached at asparagine 12. The helical transmembrane segment at 38-58 threads the bilayer; that stretch reads IFLWALFSSLFVHGAAGVLMF. Residues 59-68 are Cytoplasmic-facing; it reads VMLQRHRQGR. A helical membrane pass occupies residues 69–89; it reads VISIIAVSIGFLASVTGAMIT. Topologically, residues 90 to 104 are extracellular; it reads SAAVAGIYRVAGKNM. Residues 105-125 form a helical membrane-spanning segment; the sequence is APLEALVWGVGQTVLTLIISF. Topologically, residues 126 to 132 are cytoplasmic; sequence SRILATL.

It belongs to the TMEM170 family. Interacts with CTNNB1.

The protein localises to the cell membrane. In Mus musculus (Mouse), this protein is Transmembrane protein 170B.